Here is a 421-residue protein sequence, read N- to C-terminus: Gamma-glutamyl phosphate reductase (421 aa).

Belongs to the gamma-glutamyl phosphate reductase family.

The protein resides in the cytoplasm. The catalysed reaction is L-glutamate 5-semialdehyde + phosphate + NADP(+) = L-glutamyl 5-phosphate + NADPH + H(+). It functions in the pathway amino-acid biosynthesis; L-proline biosynthesis; L-glutamate 5-semialdehyde from L-glutamate: step 2/2. Catalyzes the NADPH-dependent reduction of L-glutamate 5-phosphate into L-glutamate 5-semialdehyde and phosphate. The product spontaneously undergoes cyclization to form 1-pyrroline-5-carboxylate. The sequence is that of Gamma-glutamyl phosphate reductase from Pseudomonas syringae pv. tomato (strain ATCC BAA-871 / DC3000).